The sequence spans 306 residues: MPEAGFQATNAFTECKFTCTSGKCLYLGSLVCNQQNDCGDNSDEENCLLVTEHPPPGIFNSELEFAQIIIIVVVVTVMVVVIVCLLNHYKVSTRSFINRPNQSRRREDGLPQEGCLWPSDSAAPRLGASEIMHAPRSRDRFTAPSFIQRDRFSRFQPTYPYVQHEIDLPPTISLSDGEEPPPYQGPCTLQLRDPEQQMELNRESVRAPPNRTIFDSDLIDIAMYSGGPCPPSSNSGISASTCSSNGRMEGPPPTYSEVMGHHPGASFLHHQRSNAHRGSRLQFQQNNAESTIVPIKGKDRKPGNLV.

The Lumenal portion of the chain corresponds to 1–64 (MPEAGFQATN…PPGIFNSELE (64 aa)). One can recognise an LDL-receptor class A domain in the interval 16–48 (KFTCTSGKCLYLGSLVCNQQNDCGDNSDEENCL). Intrachain disulfides connect Cys-19-Cys-38 and Cys-32-Cys-47. A helical transmembrane segment spans residues 65-85 (FAQIIIIVVVVTVMVVVIVCL). Residues 86 to 306 (LNHYKVSTRS…GKDRKPGNLV (221 aa)) are Cytoplasmic-facing. The short motif at 180–183 (PPPY) is the PPxY motif 1 element. The SMAD interaction motif (SIM) motif lies at 208–211 (PPNR). A PPxY motif 2 motif is present at residues 252–255 (PPTY). The tract at residues 286–306 (NNAESTIVPIKGKDRKPGNLV) is disordered. The span at 296-306 (KGKDRKPGNLV) shows a compositional bias: basic and acidic residues.

This sequence belongs to the PMEPA1 family. In terms of assembly, interacts with PMEPA1. Interacts (via the SMAD interaction motif) with SMAD2 and SMAD3. In terms of tissue distribution, expressed in lymphocytes.

Its subcellular location is the early endosome membrane. Functions as a negative regulator of TGF-beta signaling and thereby probably plays a role in cell proliferation, differentiation, apoptosis, motility, extracellular matrix production and immunosuppression. In the canonical TGF-beta pathway, ZFYVE9/SARA recruits the intracellular signal transducer and transcriptional modulators SMAD2 and SMAD3 to the TGF-beta receptor. Phosphorylated by the receptor, SMAD2 and SMAD3 then form a heteromeric complex with SMAD4 that translocates to the nucleus to regulate transcription. Through interaction with SMAD2 and SMAD3, LDLRAD4 may compete with ZFYVE9 and SMAD4 and prevent propagation of the intracellular signal. This Homo sapiens (Human) protein is Low-density lipoprotein receptor class A domain-containing protein 4 (LDLRAD4).